Reading from the N-terminus, the 906-residue chain is ATP-dependent DNA helicase DDX11 (906 aa).

The 434-residue stretch at 9 to 442 folds into the Helicase ATP-binding domain; it reads GGIHFPFPFP…KNLMYIKQIL (434 aa). ATP is bound at residue 44-51; it reads SPTGTGKS. The disordered stretch occupies residues 78-111; it reads APGSGPPSSEKNSLLTSSSCQEPTDTPRPAGEPD. Over residues 85 to 96 the composition is skewed to low complexity; that stretch reads SSEKNSLLTSSS. S260 carries the post-translational modification Phosphoserine. [4Fe-4S] cluster contacts are provided by C265 and C283. A compositionally biased stretch (basic and acidic residues) spans 284–301; sequence VDMQRSKREKNGTGEDKP. A disordered region spans residues 284–310; the sequence is VDMQRSKREKNGTGEDKPKRKRQKIQT. Residues C312 and C347 each coordinate [4Fe-4S] cluster. The DEAH box signature appears at 390–393; it reads DEAH.

This sequence belongs to the DEAD box helicase family. DEAH subfamily. DDX11/CHL1 sub-subfamily. Associates with the CTF18-RFC complex. Associates with a cohesin complex composed of RAD21, SMC1 proteins and SMC3. Interacts with CHTF18. Interacts with DSCC1. Interacts with FEN1; this interaction is direct and increases flap endonuclease activity of FEN1. Interacts with PCNA. Interacts with POLR1A and UBTF. Interacts with RAD21, SMC1 proteins and SMC3. Interacts with RFC2. Interacts with TIMELESS; this interaction increases recruitment of both proteins onto chromatin in response to replication stress induction by hydroxyurea. Requires [4Fe-4S] cluster as cofactor.

It is found in the nucleus. Its subcellular location is the nucleolus. It localises to the cytoplasm. The protein resides in the cytoskeleton. The protein localises to the spindle pole. It is found in the midbody. Its subcellular location is the microtubule organizing center. It localises to the centrosome. The enzyme catalyses Couples ATP hydrolysis with the unwinding of duplex DNA at the replication fork by translocating in the 5'-3' direction. This creates two antiparallel DNA single strands (ssDNA). The leading ssDNA polymer is the template for DNA polymerase III holoenzyme which synthesizes a continuous strand.. It carries out the reaction ATP + H2O = ADP + phosphate + H(+). Its function is as follows. DNA-dependent ATPase and ATP-dependent DNA helicase that participates in various functions in genomic stability, including DNA replication, DNA repair and heterochromatin organization as well as in ribosomal RNA synthesis. Its double-stranded DNA helicase activity requires either a minimal 5'-single-stranded tail length of approximately 15 nt (flap substrates) or 10 nt length single-stranded gapped DNA substrates of a partial duplex DNA structure for helicase loading and translocation along DNA in a 5' to 3' direction. The helicase activity is capable of displacing duplex regions up to 100 bp, which can be extended up to 500 bp by the replication protein A (RPA) or the cohesion CTF18-replication factor C (Ctf18-RFC) complex activities. Also shows ATPase- and helicase activities on substrates that mimic key DNA intermediates of replication, repair and homologous recombination reactions, including forked duplex, anti-parallel G-quadruplex and three-stranded D-loop DNA molecules. Plays a role in DNA double-strand break (DSB) repair at the DNA replication fork during DNA replication recovery from DNA damage. Recruited with TIMELESS factor upon DNA-replication stress response at DNA replication fork to preserve replication fork progression, and hence ensure DNA replication fidelity. Also cooperates with TIMELESS factor during DNA replication to regulate proper sister chromatid cohesion and mitotic chromosome segregation. Stimulates 5'-single-stranded DNA flap endonuclease activity of FEN1 in an ATP- and helicase-independent manner; and hence it may contribute in Okazaki fragment processing at DNA replication fork during lagging strand DNA synthesis. Its ability to function at DNA replication fork is modulated by its binding to long non-coding RNA (lncRNA) cohesion regulator non-coding RNA DDX11-AS1/CONCR, which is able to increase both DDX11 ATPase activity and binding to DNA replicating regions. Also plays a role in heterochromatin organization. Involved in rRNA transcription activation through binding to active hypomethylated rDNA gene loci by recruiting UBTF and the RNA polymerase Pol I transcriptional machinery. Plays a role in embryonic development and prevention of aneuploidy. Involved in melanoma cell proliferation and survival. Associates with chromatin at DNA replication fork regions. Binds to single- and double-stranded DNAs. The polypeptide is ATP-dependent DNA helicase DDX11 (Mus musculus (Mouse)).